Reading from the N-terminus, the 984-residue chain is Mineralocorticoid receptor (984 aa).

Residues 1–602 (METKGYHSLP…STGSSRPSKI (602 aa)) form a modulating region. Positions 231-243 (QGTPLTCSPNVEN) are enriched in polar residues. Disordered stretches follow at residues 231-329 (QGTP…AAST) and 347-373 (GTSA…QEVP). Phosphoserine occurs at positions 250, 259, 283, 287, and 299. A compositionally biased stretch (low complexity) spans 259 to 291 (SPLSSPLSSMKSSISSPPSHCSVKSPVSSPNNV). Residues 292 to 329 (TLRSSVSSPANINNSRCSVSSPSNTNNRSTLSSPAAST) are compositionally biased toward polar residues. Zn(2+)-binding residues include cysteine 603, cysteine 606, cysteine 620, cysteine 623, cysteine 639, cysteine 645, cysteine 655, and cysteine 658. 2 consecutive NR C4-type zinc fingers follow at residues 603–623 (CLVC…CGSC) and 639–663 (CAGR…LQKC). Residues 603–668 (CLVCGDEASG…RLQKCLQAGM (66 aa)) constitute a DNA-binding region (nuclear receptor). The tract at residues 669 to 725 (NLGARKSKKLGKLKGIHEEQPQQQQPPPPPPPPQSPEEGTTYIAPAKEPSVNTALVP) is hinge. Residues 684–710 (IHEEQPQQQQPPPPPPPPQSPEEGTTY) form a disordered region. The span at 692–703 (QQPPPPPPPPQS) shows a compositional bias: pro residues. Residues 726-964 (QLSTISRALT…EFPAMLVEII (239 aa)) form the NR LBD domain. 21-hydroxyprogesterone-binding residues include asparagine 770 and glutamine 776. Residues asparagine 770 and glutamine 776 each contribute to the aldosterone site. Progesterone-binding residues include asparagine 770 and glutamine 776. Residues 782–785 (KWAK) are important for coactivator binding. 2 residues coordinate 21-hydroxyprogesterone: arginine 817 and threonine 945. 2 residues coordinate aldosterone: arginine 817 and threonine 945. Arginine 817 and threonine 945 together coordinate progesterone.

The protein belongs to the nuclear hormone receptor family. NR3 subfamily. Heteromultimeric cytoplasmic complex with HSP90, HSP70, and FKBP4, in the absence of ligand. After ligand binding, it translocates to the nucleus and binds to DNA as a homodimer and as a heterodimer with NR3C1. May interact with HSD11B2 in the absence of ligand. Binds the coactivators NCOA1, NCOA2, TIF1 and NRIP1. In terms of processing, phosphorylated. In terms of tissue distribution, ubiquitous. Highly expressed in distal tubules, convoluted tubules and cortical collecting duct in kidney, and in sweat glands. Detected at lower levels in cardiomyocytes, in epidermis and in colon enterocytes.

It localises to the cytoplasm. It is found in the nucleus. Its subcellular location is the endoplasmic reticulum membrane. Functionally, receptor for both mineralocorticoids (MC) such as aldosterone and glucocorticoids (GC) such as corticosterone or cortisol. Binds to mineralocorticoid response elements (MRE) and transactivates target genes. The effect of MC is to increase ion and water transport and thus raise extracellular fluid volume and blood pressure and lower potassium levels. In Homo sapiens (Human), this protein is Mineralocorticoid receptor (NR3C2).